The primary structure comprises 470 residues: Ribulose bisphosphate carboxylase large chain (470 aa).

The substrate site is built by N115 and T165. The Proton acceptor role is filled by K167. K169 contributes to the substrate binding site. Mg(2+)-binding residues include K193, D195, and E196. K193 is modified (N6-carboxylysine). Residue H286 is the Proton acceptor of the active site. Substrate is bound by residues R287, H319, and S371.

The protein belongs to the RuBisCO large chain family. Type I subfamily. Heterohexadecamer of 8 large chains and 8 small chains. It depends on Mg(2+) as a cofactor.

The protein resides in the carboxysome. The catalysed reaction is 2 (2R)-3-phosphoglycerate + 2 H(+) = D-ribulose 1,5-bisphosphate + CO2 + H2O. It catalyses the reaction D-ribulose 1,5-bisphosphate + O2 = 2-phosphoglycolate + (2R)-3-phosphoglycerate + 2 H(+). Functionally, ruBisCO catalyzes two reactions: the carboxylation of D-ribulose 1,5-bisphosphate, the primary event in carbon dioxide fixation, as well as the oxidative fragmentation of the pentose substrate in the photorespiration process. Both reactions occur simultaneously and in competition at the same active site. This Synechococcus sp. (strain CC9311) protein is Ribulose bisphosphate carboxylase large chain.